We begin with the raw amino-acid sequence, 213 residues long: Pyridoxine/pyridoxamine 5'-phosphate oxidase (213 aa).

FMN-binding positions include 60 to 65, 75 to 76, K82, and Q104; these read RMVLMK and YS. K65 contacts substrate. Substrate contacts are provided by Y122 and R126. Residues 139–140 and W184 each bind FMN; that span reads QS. Residue 190–192 coordinates substrate; that stretch reads RLH. R194 lines the FMN pocket.

It belongs to the pyridoxamine 5'-phosphate oxidase family. In terms of assembly, homodimer. It depends on FMN as a cofactor.

It catalyses the reaction pyridoxamine 5'-phosphate + O2 + H2O = pyridoxal 5'-phosphate + H2O2 + NH4(+). The enzyme catalyses pyridoxine 5'-phosphate + O2 = pyridoxal 5'-phosphate + H2O2. Its pathway is cofactor metabolism; pyridoxal 5'-phosphate salvage; pyridoxal 5'-phosphate from pyridoxamine 5'-phosphate: step 1/1. It participates in cofactor metabolism; pyridoxal 5'-phosphate salvage; pyridoxal 5'-phosphate from pyridoxine 5'-phosphate: step 1/1. Functionally, catalyzes the oxidation of either pyridoxine 5'-phosphate (PNP) or pyridoxamine 5'-phosphate (PMP) into pyridoxal 5'-phosphate (PLP). The sequence is that of Pyridoxine/pyridoxamine 5'-phosphate oxidase from Rhodopseudomonas palustris (strain BisA53).